The chain runs to 1905 residues: MRRQWGALLLGALLCAHGLASSPECACGRSHFTCAVSALGECTCIPAQWQCDGDNDCGDHSDEDGCILPTCSPLDFHCDNGKCIRRSWVCDGDNDCEDDSDEQDCPPRECEEDEFPCQNGYCIRSLWHCDGDNDCGDNSDEQCDMRKCSDKEFRCSDGSCIAEHWYCDGDTDCKDGSDEENCPSAVPAPPCNLEEFQCAYGRCILDIYHCDGDDDCGDWSDESDCSSHQPCRSGEFMCDSGLCINAGWRCDGDADCDDQSDERNCTTSMCTAEQFRCHSGRCVRLSWRCDGEDDCADNSDEENCENTGSPQCALDQFLCWNGRCIGQRKLCNGVNDCGDNSDESPQQNCRPRTGEENCNVNNGGCAQKCQMVRGAVQCTCHTGYRLTEDGHTCQDVNECAEEGYCSQGCTNSEGAFQCWCETGYELRPDRRSCKALGPEPVLLFANRIDIRQVLPHRSEYTLLLNNLENAIALDFHHRRELVFWSDVTLDRILRANLNGSNVEEVVSTGLESPGGLAVDWVHDKLYWTDSGTSRIEVANLDGAHRKVLLWQNLEKPRAIALHPMEGTIYWTDWGNTPRIEASSMDGSGRRIIADTHLFWPNGLTIDYAGRRMYWVDAKHHVIERANLDGSHRKAVISQGLPHPFAITVFEDSLYWTDWHTKSINSANKFTGKNQEIIRNKLHFPMDIHTLHPQRQPAGKNRCGDNNGGCTHLCLPSGQNYTCACPTGFRKISSHACAQSLDKFLLFARRMDIRRISFDTEDLSDDVIPLADVRSAVALDWDSRDDHVYWTDVSTDTISRAKWDGTGQEVVVDTSLESPAGLAIDWVTNKLYWTDAGTDRIEVANTDGSMRTVLIWENLDRPRDIVVEPMGGYMYWTDWGASPKIERAGMDASGRQVIISSNLTWPNGLAIDYGSQRLYWADAGMKTIEFAGLDGSKRKVLIGSQLPHPFGLTLYGERIYWTDWQTKSIQSADRLTGLDRETLQENLENLMDIHVFHRRRPPVSTPCAMENGGCSHLCLRSPNPSGFSCTCPTGINLLSDGKTCSPGMNSFLIFARRIDIRMVSLDIPYFADVVVPINITMKNTIAIGVDPQEGKVYWSDSTLHRISRANLDGSQHEDIITTGLQTTDGLAVDAIGRKVYWTDTGTNRIEVGNLDGSMRKVLVWQNLDSPRAIVLYHEMGFMYWTDWGENAKLERSGMDGSDRAVLINNNLGWPNGLTVDKASSQLLWADAHTERIEAADLNGANRHTLVSPVQHPYGLTLLDSYIYWTDWQTRSIHRADKGTGSNVILVRSNLPGLMDMQAVDRAQPLGFNKCGSRNGGCSHLCLPRPSGFSCACPTGIQLKGDGKTCDPSPETYLLFSSRGSIRRISLDTSDHTDVHVPVPELNNVISLDYDSVDGKVYYTDVFLDVIRRADLNGSNMETVIGRGLKTTDGLAVDWVARNLYWTDTGRNTIEASRLDGSCRKVLINNSLDEPRAIAVFPRKGYLFWTDWGHIAKIERANLDGSERKVLINTDLGWPNGLTLDYDTRRIYWVDAHLDRIESADLNGKLRQVLVSHVSHPFALTQQDRWIYWTDWQTKSIQRVDKYSGRNKETVLANVEGLMDIIVVSPQRQTGTNACGVNNGGCTHLCFARASDFVCACPDEPDSRPCSLVPGLVPPAPRATGMSEKSPVLPNTPPTTLYSSTTRTRTSLEEVEGRCSERDARLGLCARSNDAVPAAPGEGLHISYAIGGLLSILLILVVIAALMLYRHKKSKFTDPGMGNLTYSNPSYRTSTQEVKIEAIPKPAMYNQLCYKKEGGPDHNYTKEKIKIVEGICLLSGDDAEWDDLKQLRSSRGGLLRDHVCMKTDTVSIQASSGSLDDTETEQLLQEEQSECSSVHTAATPERRGSLPDTGWKHERKLSSESQV.

A signal peptide spans 1–20; sequence MRRQWGALLLGALLCAHGLA. The Extracellular portion of the chain corresponds to 21-1725; that stretch reads SSPECACGRS…AAPGEGLHIS (1705 aa). LDL-receptor class A domains lie at 26-67, 70-106, 109-144, 147-183, 190-226, 230-266, 269-305, and 311-350; these read ACGR…DGCI, TCSPLDFHCDNGKCIRRSWVCDGDNDCEDDSDEQDCP, ECEEDEFPCQNGYCIRSLWHCDGDNDCGDNSDEQCD, KCSDKEFRCSDGSCIAEHWYCDGDTDCKDGSDEENCP, PCNLEEFQCAYGRCILDIYHCDGDDDCGDWSDESDCS, PCRSGEFMCDSGLCINAGWRCDGDADCDDQSDERNCT, MCTAEQFRCHSGRCVRLSWRCDGEDDCADNSDEENCE, and QCALDQFLCWNGRCIGQRKLCNGVNDCGDNSDESPQQNCR. Intrachain disulfides connect C27-C44, C34-C57, C51-C66, C71-C83, C78-C96, C90-C105, C110-C122, C117-C135, C129-C143, C148-C160, C155-C173, C167-C182, C191-C203, C198-C216, C210-C225, C231-C243, C238-C256, C250-C265, C270-C282, C277-C295, C289-C304, C312-C324, C319-C337, C331-C349, C358-C369, C365-C378, C380-C393, C399-C409, C405-C418, and C420-C433. Residue N264 is glycosylated (N-linked (GlcNAc...) asparagine). Positions 354–394 constitute an EGF-like 1; calcium-binding domain; sequence GEENCNVNNGGCAQKCQMVRGAVQCTCHTGYRLTEDGHTCQ. Residues 395 to 434 form the EGF-like 2; calcium-binding domain; it reads DVNECAEEGYCSQGCTNSEGAFQCWCETGYELRPDRRSCK. LDL-receptor class B repeat units follow at residues 480–522, 523–565, 566–609, 610–652, and 653–693; these read ELVF…DWVH, DKLY…HPME, GTIY…DYAG, RRMY…FEDS, and LYWT…LHPQ. A glycan (N-linked (GlcNAc...) asparagine) is linked at N498. One can recognise an EGF-like 3 domain in the interval 698 to 737; that stretch reads GKNRCGDNNGGCTHLCLPSGQNYTCACPTGFRKISSHACA. Cystine bridges form between C702/C713, C709/C722, and C724/C736. N719 carries an N-linked (GlcNAc...) asparagine glycan. LDL-receptor class B repeat units lie at residues 785 to 827, 828 to 870, 871 to 914, 915 to 956, and 957 to 998; these read DHVY…DWVT, NKLY…EPMG, GYMY…DYGS, QRLY…LYGE, and RIYW…FHRR. N901 carries an N-linked (GlcNAc...) asparagine glycan. A glycan (N-linked (GlcNAc...) asparagine) is linked at N1077. LDL-receptor class B repeat units follow at residues 1093–1135, 1136–1178, 1179–1222, 1223–1263, 1264–1306, 1397–1439, 1440–1482, 1483–1526, 1527–1568, and 1569–1610; these read GKVY…DAIG, RKVY…YHEM, GFMY…DKAS, SQLL…LLDS, YIYW…DRAQ, GKVY…DWVA, RNLY…FPRK, GYLF…DYDT, RRIY…QDRW, and IYWT…SPQR. N-linked (GlcNAc...) asparagine glycans are attached at residues N1415 and N1467. The tract at residues 1659-1686 is disordered; sequence PRATGMSEKSPVLPNTPPTTLYSSTTRT. Positions 1676–1686 are enriched in low complexity; it reads PTTLYSSTTRT. Residues 1726–1746 form a helical membrane-spanning segment; that stretch reads YAIGGLLSILLILVVIAALML. Over 1747–1905 the chain is Cytoplasmic; sequence YRHKKSKFTD…ERKLSSESQV (159 aa). The short motif at 1766–1769 is the Endocytosis signal element; that stretch reads NPSY. The disordered stretch occupies residues 1852–1905; it reads ASSGSLDDTETEQLLQEEQSECSSVHTAATPERRGSLPDTGWKHERKLSSESQV. Residues 1882-1905 are compositionally biased toward basic and acidic residues; sequence PERRGSLPDTGWKHERKLSSESQV.

This sequence belongs to the LDLR family. In terms of assembly, homooligomer. Interacts with MUSK; the heterodimer forms an AGRIN receptor complex that binds AGRIN resulting in activation of MUSK. Interacts (via the extracellular domain) with SOST; the interaction facilitates the inhibition of Wnt signaling. Interacts with MESD; the interaction promotes glycosylation of LRP4 and its cell-surface expression. As to expression, expressed in bone; present in osteoblasts and osteocytes. No expression is observed in osteoclast. Expressed in several regions of the brain.

Its subcellular location is the cell membrane. Its function is as follows. Mediates SOST-dependent inhibition of bone formation. Functions as a specific facilitator of SOST-mediated inhibition of Wnt signaling. Plays a key role in the formation and the maintenance of the neuromuscular junction (NMJ), the synapse between motor neuron and skeletal muscle. Directly binds AGRIN and recruits it to the MUSK signaling complex. Mediates the AGRIN-induced phosphorylation of MUSK, the kinase of the complex. The activation of MUSK in myotubes induces the formation of NMJ by regulating different processes including the transcription of specific genes and the clustering of AChR in the postsynaptic membrane. Alternatively, may be involved in the negative regulation of the canonical Wnt signaling pathway, being able to antagonize the LRP6-mediated activation of this pathway. More generally, has been proposed to function as a cell surface endocytic receptor binding and internalizing extracellular ligands for degradation by lysosomes. May play an essential role in the process of digit differentiation. This Homo sapiens (Human) protein is Low-density lipoprotein receptor-related protein 4 (LRP4).